Reading from the N-terminus, the 218-residue chain is Protein GrpE (218 aa).

The disordered stretch occupies residues 1–78 (MSEFNKDDYL…DSADTLTPLG (78 aa)). A compositionally biased stretch (low complexity) spans 14-58 (PDPSDAEAAAQASSGADASAESGSAQDSAAQAPSNEGADAAPAAA).

This sequence belongs to the GrpE family. Homodimer.

It localises to the cytoplasm. Functionally, participates actively in the response to hyperosmotic and heat shock by preventing the aggregation of stress-denatured proteins, in association with DnaK and GrpE. It is the nucleotide exchange factor for DnaK and may function as a thermosensor. Unfolded proteins bind initially to DnaJ; upon interaction with the DnaJ-bound protein, DnaK hydrolyzes its bound ATP, resulting in the formation of a stable complex. GrpE releases ADP from DnaK; ATP binding to DnaK triggers the release of the substrate protein, thus completing the reaction cycle. Several rounds of ATP-dependent interactions between DnaJ, DnaK and GrpE are required for fully efficient folding. The sequence is that of Protein GrpE from Bifidobacterium longum (strain NCC 2705).